We begin with the raw amino-acid sequence, 408 residues long: Succinylornithine transaminase (408 aa).

Lys252 is subject to N6-(pyridoxal phosphate)lysine.

Belongs to the class-III pyridoxal-phosphate-dependent aminotransferase family. AstC subfamily. It depends on pyridoxal 5'-phosphate as a cofactor.

It carries out the reaction N(2)-succinyl-L-ornithine + 2-oxoglutarate = N-succinyl-L-glutamate 5-semialdehyde + L-glutamate. It functions in the pathway amino-acid degradation; L-arginine degradation via AST pathway; L-glutamate and succinate from L-arginine: step 3/5. In terms of biological role, catalyzes the transamination of N(2)-succinylornithine and alpha-ketoglutarate into N(2)-succinylglutamate semialdehyde and glutamate. Can also act as an acetylornithine aminotransferase. This chain is Succinylornithine transaminase, found in Salmonella choleraesuis (strain SC-B67).